The sequence spans 197 residues: Phospholipid hydroperoxide glutathione peroxidase (197 aa).

A Phosphoserine modification is found at S40. U73 is a catalytic residue. A non-standard amino acid (selenocysteine) is located at residue U73.

The protein belongs to the glutathione peroxidase family. In terms of assembly, monomer. Has a tendency to form higher mass oligomers. Interacts with FUNDC1; this interaction promotes GPX4 recruitment into mitochondria through TOM/TIM complex where it is degraded by mitophagy.

It localises to the mitochondrion. Its subcellular location is the cytoplasm. It carries out the reaction a hydroperoxy polyunsaturated fatty acid + 2 glutathione = a hydroxy polyunsaturated fatty acid + glutathione disulfide + H2O. The enzyme catalyses 2 glutathione + H2O2 = glutathione disulfide + 2 H2O. It catalyses the reaction tert-butyl hydroperoxide + 2 glutathione = tert-butanol + glutathione disulfide + H2O. The catalysed reaction is cumene hydroperoxide + 2 glutathione = 2-phenylpropan-2-ol + glutathione disulfide + H2O. It carries out the reaction (9S)-hydroperoxy-(10E,12Z)-octadecadienoate + 2 glutathione = (9S)-hydroxy-(10E,12Z)-octadecadienoate + glutathione disulfide + H2O. The enzyme catalyses (13S)-hydroperoxy-(9Z,11E)-octadecadienoate + 2 glutathione = (13S)-hydroxy-(9Z,11E)-octadecadienoate + glutathione disulfide + H2O. It catalyses the reaction (5S)-hydroperoxy-(6E,8Z,11Z,14Z)-eicosatetraenoate + 2 glutathione = (5S)-hydroxy-(6E,8Z,11Z,14Z)-eicosatetraenoate + glutathione disulfide + H2O. The catalysed reaction is (12R)-hydroperoxy-(5Z,8Z,10E,14Z)-eicosatetraenoate + 2 glutathione = (12R)-hydroxy-(5Z,8Z,10E,14Z)-eicosatetraenoate + glutathione disulfide + H2O. It carries out the reaction (12S)-hydroperoxy-(5Z,8Z,10E,14Z)-eicosatetraenoate + 2 glutathione = (12S)-hydroxy-(5Z,8Z,10E,14Z)-eicosatetraenoate + glutathione disulfide + H2O. The enzyme catalyses (15S)-hydroperoxy-(5Z,8Z,11Z,13E)-eicosatetraenoate + 2 glutathione = (15S)-hydroxy-(5Z,8Z,11Z,13E)-eicosatetraenoate + glutathione disulfide + H2O. It catalyses the reaction (5S)-hydroperoxy-(6E,8Z,11Z,14Z,17Z)-eicosapentaenoate + 2 glutathione = (5S)-hydroxy-(6E,8Z,11Z,14Z,17Z)-eicosapentaenoate + glutathione disulfide + H2O. The catalysed reaction is (12S)-hydroperoxy-(5Z,8Z,10E,14Z,17Z)-eicosapentaenoate + 2 glutathione = (12S)-hydroxy-(5Z,8Z,10E,14Z,17Z)-eicosapentaenoate + glutathione disulfide + H2O. It carries out the reaction (15S)-hydroperoxy-(5Z,8Z,11Z,13E,17Z)-eicosapentaenoate + 2 glutathione = (15S)-hydroxy-(5Z,8Z,11Z,13E,17Z)-eicosapentaenoate + glutathione disulfide + H2O. The enzyme catalyses (15S)-hydroperoxy-(11Z,13E)-eicosadienoate + 2 glutathione = (15S)-hydroxy-(11Z,13E)-eicosadienoate + glutathione disulfide + H2O. It catalyses the reaction (17S)-hydroperoxy-(4Z,7Z,10Z,13Z,15E,19Z)-docosahexaenoate + 2 glutathione = (17S)-hydroxy-(4Z,7Z,10Z,13Z,15E,19Z)-docosahexaenoate + glutathione disulfide + H2O. The catalysed reaction is a hydroperoxy-1,2-diacyl-glycero-3-phosphocholine + 2 glutathione = a hydroxy-1,2-diacyl-glycero-3-phosphocholine + glutathione disulfide + H2O. Essential antioxidant peroxidase that directly reduces phospholipid hydroperoxide even if they are incorporated in membranes and lipoproteins. Can also reduce fatty acid hydroperoxide, cholesterol hydroperoxide and thymine hydroperoxide. Plays a key role in protecting cells from oxidative damage by preventing membrane lipid peroxidation. Required to prevent cells from ferroptosis, a non-apoptotic cell death resulting from an iron-dependent accumulation of lipid reactive oxygen species. The presence of selenocysteine (Sec) versus Cys at the active site is essential for life: it provides resistance to overoxidation and prevents cells against ferroptosis. The presence of Sec at the active site is also essential for the survival of a specific type of parvalbumin-positive interneurons, thereby preventing against fatal epileptic seizures. May be required to protect cells from the toxicity of ingested lipid hydroperoxides. Required for normal sperm development and male fertility. Essential for maturation and survival of photoreceptor cells. Plays a role in a primary T-cell response to viral and parasitic infection by protecting T-cells from ferroptosis and by supporting T-cell expansion. Plays a role of glutathione peroxidase in platelets in the arachidonic acid metabolism. Reduces hydroperoxy ester lipids formed by a 15-lipoxygenase that may play a role as down-regulator of the cellular 15-lipoxygenase pathway. Can also reduce small soluble hydroperoxides such as H2O2, cumene hydroperoxide and tert-butyl hydroperoxide. This Pongo pygmaeus (Bornean orangutan) protein is Phospholipid hydroperoxide glutathione peroxidase.